Consider the following 191-residue polypeptide: MPLHSLERDNMRRLIAPSILVTVFLVPALALTNTSDSYPLDGSVGTQTIHVDALRGVVSIRDNSVQSEWDGVMDYKNDLLAAKLFSKMACVLAKMDPAAFPSLDDITQALGKQASGHYPPTRGLTYTVLPSRIKNLAQYGVPIKDLCRAVPTYFARQQKEGTALTMDPDSCSELQLLSFMGLSICGEIPGL.

A signal peptide spans 1-30 (MPLHSLERDNMRRLIAPSILVTVFLVPALA). An N-linked (GlcNAc...) asparagine glycan is attached at Asn-33. One can recognise a BRICHOS domain in the interval 63-155 (NSVQSEWDGV…LCRAVPTYFA (93 aa)). Cys-90 and Cys-147 are joined by a disulfide.

It belongs to the gastrokine family. In terms of tissue distribution, expressed in stomach. Present in mucus cells at the base of antral glands, and Brunner glands of the duodenum. Present at lower levels in the mucus neck cell region of the fundus (at protein level).

It localises to the secreted. Its function is as follows. Inhibits gastric epithelial cell proliferation. This Mus musculus (Mouse) protein is Gastrokine-3 (Gkn3).